The following is a 105-amino-acid chain: Flagellar transcriptional regulator FlhD (105 aa).

Belongs to the FlhD family. In terms of assembly, homodimer; disulfide-linked. Forms a heterohexamer composed of two FlhC and four FlhD subunits. Each FlhC binds a FlhD dimer, forming a heterotrimer, and a hexamer assembles by dimerization of two heterotrimers.

The protein resides in the cytoplasm. In terms of biological role, functions in complex with FlhC as a master transcriptional regulator that regulates transcription of several flagellar and non-flagellar operons by binding to their promoter region. Activates expression of class 2 flagellar genes, including fliA, which is a flagellum-specific sigma factor that turns on the class 3 genes. Also regulates genes whose products function in a variety of physiological pathways. The protein is Flagellar transcriptional regulator FlhD of Ralstonia nicotianae (strain ATCC BAA-1114 / GMI1000) (Ralstonia solanacearum).